A 294-amino-acid chain; its full sequence is Ribosomal RNA small subunit methyltransferase A (294 aa).

S-adenosyl-L-methionine contacts are provided by asparagine 31, leucine 33, glycine 58, glutamate 79, aspartate 111, and asparagine 136.

It belongs to the class I-like SAM-binding methyltransferase superfamily. rRNA adenine N(6)-methyltransferase family. RsmA subfamily.

The protein resides in the cytoplasm. The enzyme catalyses adenosine(1518)/adenosine(1519) in 16S rRNA + 4 S-adenosyl-L-methionine = N(6)-dimethyladenosine(1518)/N(6)-dimethyladenosine(1519) in 16S rRNA + 4 S-adenosyl-L-homocysteine + 4 H(+). Functionally, specifically dimethylates two adjacent adenosines (A1518 and A1519) in the loop of a conserved hairpin near the 3'-end of 16S rRNA in the 30S particle. May play a critical role in biogenesis of 30S subunits. The chain is Ribosomal RNA small subunit methyltransferase A from Lactobacillus helveticus (strain DPC 4571).